The sequence spans 326 residues: D-alanine--D-alanine ligase (326 aa).

Residues 112-312 (KRIWRFEGLP…YENLCLGILA (201 aa)) enclose the ATP-grasp domain. ATP is bound at residue 138–193 (LQALGAPMIVKPSREGSTIGLTKVWTAEECDQAYVLASRYDPEVLCEEFIEGDETT). Positions 265, 279, and 281 each coordinate Mg(2+).

The protein belongs to the D-alanine--D-alanine ligase family. It depends on Mg(2+) as a cofactor. Requires Mn(2+) as cofactor.

It is found in the cytoplasm. It carries out the reaction 2 D-alanine + ATP = D-alanyl-D-alanine + ADP + phosphate + H(+). Its pathway is cell wall biogenesis; peptidoglycan biosynthesis. Functionally, cell wall formation. This is D-alanine--D-alanine ligase from Delftia acidovorans (strain DSM 14801 / SPH-1).